Here is a 503-residue protein sequence, read N- to C-terminus: Maturase K (503 aa).

This sequence belongs to the intron maturase 2 family. MatK subfamily.

Its subcellular location is the plastid. It is found in the chloroplast. Usually encoded in the trnK tRNA gene intron. Probably assists in splicing its own and other chloroplast group II introns. The sequence is that of Maturase K from Silene latifolia (White campion).